Here is a 532-residue protein sequence, read N- to C-terminus: Egg peptide speract receptor (532 aa).

The N-terminal stretch at 1 to 30 (MGLPMMLQQYCWAACLVICIAISSVDDVGA) is a signal peptide. Residues 31 to 491 (EQNYGREAVE…VVCEGSTAPP (461 aa)) are Extracellular-facing. SRCR domains follow at residues 43–144 (IRLI…VECL), 153–257 (LRMI…VVCK), 264–366 (IRLM…VVCA), and 382–485 (VRIV…VVCE). Cystine bridges form between Cys68/Cys133, Cys81/Cys143, Cys112/Cys122, Cys178/Cys244, Cys191/Cys256, Cys223/Cys233, Cys289/Cys355, Cys302/Cys365, Cys335/Cys345, Cys406/Cys475, Cys419/Cys484, and Cys454/Cys465. 2 N-linked (GlcNAc...) asparagine glycosylation sites follow: Asn78 and Asn115. A glycan (N-linked (GlcNAc...) asparagine) is linked at Asn459. The chain crosses the membrane as a helical span at residues 492–520 (SGMSIAVIGGAAGGGVAGLAVAAFAFYYI). The Cytoplasmic portion of the chain corresponds to 521-532 (KFVKPAGGGGQA).

It localises to the membrane. Functionally, receptor for the egg peptide speract. This chain is Egg peptide speract receptor, found in Strongylocentrotus purpuratus (Purple sea urchin).